The following is a 693-amino-acid chain: Tegument protein UL47 (693 aa).

2 disordered regions span residues 1-32 (MSAREPAGRRRRASTRPRASPVADEPAGDGVG) and 48-126 (ELEA…GYLG). Residues 48–57 (ELEALEEMAG) are compositionally biased toward acidic residues. The segment at 50–75 (EALEEMAGDEPPVRRRREGPRARRRR) is RNA-binding. Residues 63–75 (RRRREGPRARRRR) carry the Nuclear localization signal motif. Positions 63–75 (RRRREGPRARRRR) are enriched in basic residues. Residues 647–670 (SVLGPGVRVVDIMSQFRKLLMGDE) carry the Nuclear export signal motif.

Belongs to the alphaherpesvirinae HHV-1 UL47 family. As to quaternary structure, interacts with US3 kinase. Interacts with UL31 and UL34; these interactions seem important for efficient virion nuclear egress. Interacts with UL41/VHS. Post-translationally, phosphorylated by US3. This phosphorylation is required for proper nuclear localization.

It is found in the virion tegument. It localises to the host nucleus. The protein resides in the host cytoplasm. In terms of biological role, tegument protein that can bind to various RNA transcripts. Plays a role in the attenuation of selective viral and cellular mRNA degradation by modulating the activity of host shutoff RNase UL41/VHS. Also plays a role in the primary envelopment of virions in the perinuclear space, probably by interacting with two nuclear egress proteins UL31 and UL34. The sequence is that of Tegument protein UL47 from Human herpesvirus 1 (strain F) (HHV-1).